The sequence spans 175 residues: Large ribosomal subunit protein uL10 (175 aa).

The protein belongs to the universal ribosomal protein uL10 family. In terms of assembly, part of the ribosomal stalk of the 50S ribosomal subunit. The N-terminus interacts with L11 and the large rRNA to form the base of the stalk. The C-terminus forms an elongated spine to which L12 dimers bind in a sequential fashion forming a multimeric L10(L12)X complex.

Forms part of the ribosomal stalk, playing a central role in the interaction of the ribosome with GTP-bound translation factors. In Delftia acidovorans (strain DSM 14801 / SPH-1), this protein is Large ribosomal subunit protein uL10.